Consider the following 822-residue polypeptide: Dextranase (822 aa).

The signal sequence occupies residues 1–38 (MTVNLTLQHASEIIGQDNVDLTLAAGASAKVSNLTVAS). Disordered regions lie at residues 607-669 (EPVT…VDEL) and 683-788 (ETAH…ETTS). Over residues 619-636 (NTVTSEASSETAKSENTT) the composition is skewed to low complexity. The segment covering 693 to 705 (SVSNTDQGTVASD) has biased composition (polar residues). Residues 706-761 (SITTPASEAASTAASTVSSEVSESVTVSSEPSETENSSEASTSESATPTTTAISES) show a composition bias toward low complexity. Polar residues predominate over residues 771-788 (LTESESQASTSLVSETTS).

Belongs to the glycosyl hydrolase 66 family.

It catalyses the reaction Endohydrolysis of (1-&gt;6)-alpha-D-glucosidic linkages in dextran.. In Streptococcus salivarius, this protein is Dextranase (dex).